The chain runs to 181 residues: Oligoribonuclease (181 aa).

An Exonuclease domain is found at 8 to 171; sequence LIWIDLEMTG…DDIRESVAEL (164 aa). Tyr129 is a catalytic residue.

Belongs to the oligoribonuclease family. Homodimer.

The protein resides in the cytoplasm. 3'-to-5' exoribonuclease specific for small oligoribonucleotides. This chain is Oligoribonuclease, found in Escherichia coli O157:H7.